Here is a 361-residue protein sequence, read N- to C-terminus: MVGKIAPIAVDAMGGDHAPGAIVQGAVNAARKGLPVVLVGPEARVREELARHRAGSSLPLEVHPATEVVEMHDHPGQAMRRKKDNSIRVCFDLVASGRAAGMVSAGNSGAVMAGAILVLGRPEGVERPAIVSVLPALKGSPLMLDMGAVVDCRPIHLVQFALMGEVFSRRVHGVARPRIAILSNGEEDTKGTDLTRAAAAALRRAPIDFVGYCEGRDLLTGEVDVIVTDGFTGNVALKTMEGTAKVVGEYLKRALRSTTVSKIGGLLSKAALEGMKKRIDWREVGGAPLVGVNGVGFISHGRSDALAIENAIRRAGDAARTHFIDEIARAVAPSHALLEVPANGAAAQQGPTPRRTAPPQT.

It belongs to the PlsX family. Homodimer. Probably interacts with PlsY.

It is found in the cytoplasm. It carries out the reaction a fatty acyl-[ACP] + phosphate = an acyl phosphate + holo-[ACP]. It functions in the pathway lipid metabolism; phospholipid metabolism. In terms of biological role, catalyzes the reversible formation of acyl-phosphate (acyl-PO(4)) from acyl-[acyl-carrier-protein] (acyl-ACP). This enzyme utilizes acyl-ACP as fatty acyl donor, but not acyl-CoA. The protein is Phosphate acyltransferase of Anaeromyxobacter dehalogenans (strain 2CP-C).